An 80-amino-acid chain; its full sequence is Translational regulator CsrA (80 aa).

Belongs to the CsrA/RsmA family. In terms of assembly, homodimer; the beta-strands of each monomer intercalate to form a hydrophobic core, while the alpha-helices form wings that extend away from the core.

Its subcellular location is the cytoplasm. A translational regulator that binds mRNA to regulate translation initiation and/or mRNA stability. Usually binds in the 5'-UTR at or near the Shine-Dalgarno sequence preventing ribosome-binding, thus repressing translation. Its main target seems to be the major flagellin gene, while its function is anatagonized by FliW. The chain is Translational regulator CsrA from Desulforamulus reducens (strain ATCC BAA-1160 / DSM 100696 / MI-1) (Desulfotomaculum reducens).